The sequence spans 245 residues: 1-(5-phosphoribosyl)-5-[(5-phosphoribosylamino)methylideneamino] imidazole-4-carboxamide isomerase (245 aa).

Residue Asp7 is the Proton acceptor of the active site. Residue Asp129 is the Proton donor of the active site.

Belongs to the HisA/HisF family.

The protein localises to the cytoplasm. The catalysed reaction is 1-(5-phospho-beta-D-ribosyl)-5-[(5-phospho-beta-D-ribosylamino)methylideneamino]imidazole-4-carboxamide = 5-[(5-phospho-1-deoxy-D-ribulos-1-ylimino)methylamino]-1-(5-phospho-beta-D-ribosyl)imidazole-4-carboxamide. The protein operates within amino-acid biosynthesis; L-histidine biosynthesis; L-histidine from 5-phospho-alpha-D-ribose 1-diphosphate: step 4/9. The chain is 1-(5-phosphoribosyl)-5-[(5-phosphoribosylamino)methylideneamino] imidazole-4-carboxamide isomerase from Shewanella piezotolerans (strain WP3 / JCM 13877).